The primary structure comprises 686 residues: Tripartite terminase subunit 3 (686 aa).

The Walker A motif motif lies at 219 to 226 (IPRRHGKT). A Walker B motif motif is present at residues 314–319 (LLYVDE). Glutamate 319 serves as the catalytic For ATPase activity. Catalysis depends on for nuclease activity residues aspartate 475, glutamate 548, and aspartate 660.

The protein belongs to the herpesviridae TRM3 protein family. As to quaternary structure, interacts with the terminase subunits TRM1 and TRM2. Interacts with portal protein.

It localises to the host nucleus. Component of the molecular motor that translocates viral genomic DNA in empty capsid during DNA packaging. Forms a tripartite terminase complex together with TRM1 and TRM2 in the host cytoplasm. Once the complex reaches the host nucleus, it interacts with the capsid portal vertex. This portal forms a ring in which genomic DNA is translocated into the capsid. TRM3 carries an RNase H-like nuclease activity that plays an important role for the cleavage of concatemeric viral DNA into unit length genomes. This Equine herpesvirus 2 (strain 86/87) (EHV-2) protein is Tripartite terminase subunit 3.